The chain runs to 773 residues: 4'-phosphopantetheine phosphatase (773 aa).

At Ala-2 the chain carries N-acetylalanine. Positions 2 to 402 (AECGASGSGS…SPELGPAQRA (401 aa)) are pantothenate kinase. Acetyl-CoA contacts are provided by Ser-196 and Ser-199. Tyr-320 is subject to 3'-nitrotyrosine. A phosphoserine mark is found at Ser-393 and Ser-404. The segment at 403 to 773 (RSGTFDLLEM…VIFKYEVPAE (371 aa)) is 4'-phosphopantetheine phosphatase. Thr-406 carries the post-translational modification Phosphothreonine. 3 residues coordinate Mn(2+): Asp-623, Asn-624, and Asp-659. The short motif at 724 to 728 (EGMGR) is the Subfamily II EGMGR motif element.

This sequence in the N-terminal section; belongs to the type II pantothenate kinase family. It in the C-terminal section; belongs to the damage-control phosphatase family. Phosphopantetheine phosphatase II subfamily. As to quaternary structure, homodimer. Interacts with PKM. Mn(2+) serves as cofactor. The cofactor is Ni(2+). As to expression, widely expressed with high expression in the muscle. Expressed in the retina and lens epithelium, mainly in ganglion cell layer, outer plexiform layer and retinal pigment layer (at protein level).

It localises to the cytoplasm. It carries out the reaction (R)-4'-phosphopantetheine + H2O = (R)-pantetheine + phosphate. The catalysed reaction is (R)-4'-phosphopantetheine sulfonate + H2O = (R)-pantetheine sulfonate + phosphate. It catalyses the reaction (R)-4'-phospho-S-sulfopantetheine + H2O = (R)-S-sulfopantetheine + phosphate. Its activity is regulated as follows. Activity is strongly promoted by Co(2+), Ni(2+), Mg(2+) and Mn(2+). Activity is inhibited by EDTA. In terms of biological role, phosphatase which shows a preference for 4'-phosphopantetheine and its oxidatively damaged forms (sulfonate or S-sulfonate), providing strong indirect evidence that the phosphatase activity pre-empts damage in the coenzyme A (CoA) pathway. Hydrolyzing excess 4'-phosphopantetheine could constitute a directed overflow mechanism to prevent its oxidation to the S-sulfonate, sulfonate, or other forms. Hydrolyzing 4'-phosphopantetheine sulfonate or S-sulfonate would forestall their conversion to inactive forms of CoA and acyl carrier protein. May play a role in the physiological regulation of CoA intracellular levels. This chain is 4'-phosphopantetheine phosphatase, found in Homo sapiens (Human).